Reading from the N-terminus, the 83-residue chain is Short neurotoxin 1 (83 aa).

An N-terminal signal peptide occupies residues 1 to 21; the sequence is MKTLLLTLVVVTIVCLDLGYT. Disulfide bonds link Cys-24–Cys-45, Cys-38–Cys-62, Cys-64–Cys-75, and Cys-76–Cys-81.

Belongs to the three-finger toxin family. Short-chain subfamily. Type I alpha-neurotoxin sub-subfamily. In terms of tissue distribution, expressed by the venom gland.

Its subcellular location is the secreted. Binds to muscle nicotinic acetylcholine receptor (nAChR) and inhibit acetylcholine from binding to the receptor, thereby impairing neuromuscular transmission. This is Short neurotoxin 1 from Oxyuranus scutellatus scutellatus (Australian taipan).